Here is a 133-residue protein sequence, read N- to C-terminus: Histone H2A (133 aa).

The segment covering 1–10 (MTGGKSGGKA) has biased composition (gly residues). The interval 1 to 25 (MTGGKSGGKASGSKSSQSRSSKAGL) is disordered. Lys5 and Lys9 each carry N6-acetyllysine. Positions 11-24 (SGSKSSQSRSSKAG) are enriched in low complexity. The residue at position 106 (Gln106) is an N5-methylglutamine. Ser130 bears the Phosphoserine mark. The [ST]-Q motif motif lies at 130-131 (SQ).

It belongs to the histone H2A family. In terms of assembly, the nucleosome is a histone octamer containing two molecules each of H2A, H2B, H3 and H4 assembled in one H3-H4 heterotetramer and two H2A-H2B heterodimers. The octamer wraps approximately 147 bp of DNA. Post-translationally, phosphorylated to form H2AS128ph (gamma-H2A) in response to DNA double-strand breaks (DSBs) generated by exogenous genotoxic agents and by stalled replication forks. Phosphorylation is dependent on the DNA damage checkpoint kinases MEC1/ATR and TEL1/ATM, spreads on either side of a detected DSB site and may mark the surrounding chromatin for recruitment of proteins required for DNA damage signaling and repair. Gamma-H2A is removed from the DNA prior to the strand invasion-primer extension step of the repair process and subsequently dephosphorylated. Dephosphorylation is necessary for efficient recovery from the DNA damage checkpoint. In terms of processing, acetylated by ESA1 to form H2AK4ac and H2AK7ac.

It localises to the nucleus. The protein resides in the chromosome. In terms of biological role, core component of nucleosome which plays a central role in DNA double strand break (DSB) repair. Nucleosomes wrap and compact DNA into chromatin, limiting DNA accessibility to the cellular machineries which require DNA as a template. Histones thereby play a central role in transcription regulation, DNA repair, DNA replication and chromosomal stability. DNA accessibility is regulated via a complex set of post-translational modifications of histones, also called histone code, and nucleosome remodeling. The protein is Histone H2A (HTA1) of Coccidioides immitis (strain RS) (Valley fever fungus).